A 498-amino-acid chain; its full sequence is Resveratrol cleavage oxygenase 1 (498 aa).

Piceatannol contacts are provided by Tyr-105 and Lys-136. Residues Tyr-105 and Lys-136 each contribute to the trans-resveratrol site. Fe cation contacts are provided by His-169, His-220, and His-285. Glu-355 is a piceatannol binding site. Glu-355 is a binding site for trans-resveratrol. His-481 contacts Fe cation.

This sequence belongs to the carotenoid oxygenase family. Requires Fe(2+) as cofactor.

It catalyses the reaction trans-resveratrol + O2 = 3,5-dihydroxybenzaldehyde + 4-hydroxybenzaldehyde. It carries out the reaction piceatannol + O2 = 3,5-dihydroxybenzaldehyde + 3,4-dihydroxybenzaldehyde. Dioxygenase that cleaves the interphenyl C-alpha-C-beta double bond of resveratrol to yield 3,5-dihydroxybenzaldehyde and 4-hydroxybenzaldehyde. Also cleaves piceatannol, a compound that differs from resveratrol only in the occurrence of an additional hydroxyl group, which leads to the production of 3,4-dihydroxybenzaldehyde and 3,5-hydroxybenzaldehyde. The polypeptide is Resveratrol cleavage oxygenase 1 (Aspergillus fumigatus (strain ATCC MYA-4609 / CBS 101355 / FGSC A1100 / Af293) (Neosartorya fumigata)).